A 75-amino-acid chain; its full sequence is Small ribosomal subunit protein bS18 (75 aa).

This sequence belongs to the bacterial ribosomal protein bS18 family. Part of the 30S ribosomal subunit. Forms a tight heterodimer with protein bS6.

Its function is as follows. Binds as a heterodimer with protein bS6 to the central domain of the 16S rRNA, where it helps stabilize the platform of the 30S subunit. The sequence is that of Small ribosomal subunit protein bS18 from Mycoplasma capricolum subsp. capricolum (strain California kid / ATCC 27343 / NCTC 10154).